A 119-amino-acid polypeptide reads, in one-letter code: UPF0231 protein ECA3777 (119 aa).

This sequence belongs to the UPF0231 family.

The protein is UPF0231 protein ECA3777 of Pectobacterium atrosepticum (strain SCRI 1043 / ATCC BAA-672) (Erwinia carotovora subsp. atroseptica).